A 127-amino-acid polypeptide reads, in one-letter code: Protein ApaG (127 aa).

The ApaG domain maps to 2-127 (SELVEHIQVH…FRLAGPNQVH (126 aa)).

In Chromohalobacter salexigens (strain ATCC BAA-138 / DSM 3043 / CIP 106854 / NCIMB 13768 / 1H11), this protein is Protein ApaG.